The chain runs to 263 residues: MRDSTPLIHPTAVIDPSATLADDVRVGAFSLIGADVQIGAGTEVGPHCSIHGPTRIGRNNRFIGHAAIGGEPQDKKYAGERTELVIGDGNVIREFVTINRGTGGGGGVTVVGNDNWMLAYTHVAHDCHVGNHCVFSNNTTLAGHVTVGDYVIISGFAGAHQFCRIGAHAFLGMGALTNGDVPPFTMVGSDSLGRPRGINSEGLKRRGFDAERITAIKRAYRTLYVAGLPLADAKLQLAEQAKSSEDVRGMLEFIEAAERPLLR.

This sequence belongs to the transferase hexapeptide repeat family. LpxA subfamily. In terms of assembly, homotrimer.

The protein resides in the cytoplasm. The catalysed reaction is a (3R)-hydroxyacyl-[ACP] + UDP-N-acetyl-alpha-D-glucosamine = a UDP-3-O-[(3R)-3-hydroxyacyl]-N-acetyl-alpha-D-glucosamine + holo-[ACP]. The protein operates within glycolipid biosynthesis; lipid IV(A) biosynthesis; lipid IV(A) from (3R)-3-hydroxytetradecanoyl-[acyl-carrier-protein] and UDP-N-acetyl-alpha-D-glucosamine: step 1/6. Its function is as follows. Involved in the biosynthesis of lipid A, a phosphorylated glycolipid that anchors the lipopolysaccharide to the outer membrane of the cell. The polypeptide is Acyl-[acyl-carrier-protein]--UDP-N-acetylglucosamine O-acyltransferase (Xanthomonas euvesicatoria pv. vesicatoria (strain 85-10) (Xanthomonas campestris pv. vesicatoria)).